Reading from the N-terminus, the 303-residue chain is tRNA pseudouridine synthase B (303 aa).

Aspartate 46 serves as the catalytic Nucleophile.

The protein belongs to the pseudouridine synthase TruB family. Type 1 subfamily.

It carries out the reaction uridine(55) in tRNA = pseudouridine(55) in tRNA. Responsible for synthesis of pseudouridine from uracil-55 in the psi GC loop of transfer RNAs. The polypeptide is tRNA pseudouridine synthase B (Hydrogenovibrio crunogenus (strain DSM 25203 / XCL-2) (Thiomicrospira crunogena)).